We begin with the raw amino-acid sequence, 500 residues long: MAFLLITRRLACSSQKNLHLFIPGSRYISQAAAKVDIEFDYDGPLMKTEVPGPRSKELMKQLNTIQNAEAVHFFCNYEESRGNYLVDVDGNRMLDLYSQISSVPIGYNHPALAKLVQQPQNASTFINRPALGILPPENFVDKLQESLMSVAPRGMSQLITMACGSCSNENAFKTIFMWYRSKERGQRGFSKEELETCMVNQSPGCPDYSILSFMGAFHGRTMGCLATTHSKAIHKIDIPSFDWPIAPFPRLKYPLEEFTTDNQQEEARCLEEVEDLIVKYRKKKRTVAGIIVEPIQSEGGDNHASDDFFRKLRDIARKHGCAFLVDEVQTGGGCTGKFWAHEHWGLDDPADVMTFSKKMMTGGFFHKEEFRPSAPYRIFNTWLGDPSKNLLLAEVINIIKREDLLNNVARVGKTLLTGLLDLQAQYPQFISRVRGRGTFCSFDTPDEAIRNKLILIARNKGVVLGGCGDKSIRFRPTLVFRDHHAHLFLSIFSGILADFK.

Residues 1–28 (MAFLLITRRLACSSQKNLHLFIPGSRYI) constitute a mitochondrion transit peptide. Cys163 is a [2Fe-2S] cluster binding site. 164-165 (GS) contacts pyridoxal 5'-phosphate. Cys166 is a [2Fe-2S] cluster binding site. Arg220 contacts substrate. Lys231 is modified (N6-succinyllysine). Lys252 is modified (N6-acetyllysine; alternate). Lys252 is subject to N6-succinyllysine; alternate. Lys279 and Lys318 each carry N6-acetyllysine. Residue Lys357 is modified to N6-(pyridoxal phosphate)lysine. A pyridoxal 5'-phosphate-binding site is contributed by Thr381. Residue Lys413 is modified to N6-acetyllysine; alternate. At Lys413 the chain carries N6-succinyllysine; alternate. N6-acetyllysine occurs at positions 452 and 470.

This sequence belongs to the class-III pyridoxal-phosphate-dependent aminotransferase family. As to quaternary structure, homodimer; disulfide-linked. Pyridoxal 5'-phosphate is required as a cofactor. Requires [2Fe-2S] cluster as cofactor.

Its subcellular location is the mitochondrion matrix. The enzyme catalyses 4-aminobutanoate + 2-oxoglutarate = succinate semialdehyde + L-glutamate. The catalysed reaction is (S)-3-amino-2-methylpropanoate + 2-oxoglutarate = 2-methyl-3-oxopropanoate + L-glutamate. In terms of biological role, catalyzes the conversion of gamma-aminobutyrate and L-beta-aminoisobutyrate to succinate semialdehyde and methylmalonate semialdehyde, respectively. Can also convert delta-aminovalerate and beta-alanine. The protein is 4-aminobutyrate aminotransferase, mitochondrial of Mus musculus (Mouse).